A 131-amino-acid polypeptide reads, in one-letter code: Small ribosomal subunit protein uS9 (131 aa).

The protein belongs to the universal ribosomal protein uS9 family.

The chain is Small ribosomal subunit protein uS9 from Actinobacillus succinogenes (strain ATCC 55618 / DSM 22257 / CCUG 43843 / 130Z).